A 507-amino-acid polypeptide reads, in one-letter code: MTENQNPAIDENKLIAERRGKLGKLREKGLAFPNDFRRDSYCADLQARYGDKSKEELEEASVRAKVSGRIMAMRGPFVVIQDMTGRIQLYIDRKGLPPEQLENVKLWDLGDIVAAEGALHKSDKGDLYVNMENPRLMVKALRPLPDKHKGLTNTEMRYRQRYLDLITNEEARETFRIRSKVIESIRYFLTKRDFIEAETPMLQVIPGGATARPFVTYHNALDIEMFLRIAPELYLKRLVVGGFERVFEINRNFRNEGLSTRHNPEFTMIEFYQAFADYKDLMNLTEEMLRWVAQEALGTTEVRNTSKNTDGDVVDEIIYDFGKPFIRMTVVESILHFNPELTLGDIDNMDGAKKVATGLGIPLKASWGLGKIQIEIFEKTVEHRLMQPTFITEYPTEVSPLARRNDDNPFVTDRFEFFVGGREIANGFSELNDPEDQAERFRKQVAEKEAGDDEAMFFDEDYITALEHGMPPTAGEGIGIDRLVMLLTDSPSIRDVILFPHMRPLAD.

2 residues coordinate Mg(2+): glutamate 416 and glutamate 423.

It belongs to the class-II aminoacyl-tRNA synthetase family. Homodimer. The cofactor is Mg(2+).

The protein localises to the cytoplasm. It carries out the reaction tRNA(Lys) + L-lysine + ATP = L-lysyl-tRNA(Lys) + AMP + diphosphate. In Hahella chejuensis (strain KCTC 2396), this protein is Lysine--tRNA ligase.